The primary structure comprises 239 residues: Leucine-rich repeat-containing protein 57 (239 aa).

G2 carries N-myristoyl glycine lipidation. LRR repeat units follow at residues N39–K60, L63–K85, K86–L107, A109–L130, H132–L153, Q154–C175, R177–I197, and Q202–E222.

The protein localises to the membrane. The chain is Leucine-rich repeat-containing protein 57 (Lrrc57) from Mus musculus (Mouse).